A 95-amino-acid chain; its full sequence is CRISPR-associated endoribonuclease Cas2 1 (95 aa).

Aspartate 11 is a Mg(2+) binding site.

Belongs to the CRISPR-associated endoribonuclease Cas2 protein family. In terms of assembly, homodimer, forms a heterotetramer with a Cas1 homodimer. Mg(2+) serves as cofactor.

Functionally, CRISPR (clustered regularly interspaced short palindromic repeat), is an adaptive immune system that provides protection against mobile genetic elements (viruses, transposable elements and conjugative plasmids). CRISPR clusters contain sequences complementary to antecedent mobile elements and target invading nucleic acids. CRISPR clusters are transcribed and processed into CRISPR RNA (crRNA). Functions as a ssRNA-specific endoribonuclease. Involved in the integration of spacer DNA into the CRISPR cassette. The chain is CRISPR-associated endoribonuclease Cas2 1 from Methanospirillum hungatei JF-1 (strain ATCC 27890 / DSM 864 / NBRC 100397 / JF-1).